The sequence spans 121 residues: UPF0102 protein Mvan_2202 (121 aa).

The protein belongs to the UPF0102 family.

The protein is UPF0102 protein Mvan_2202 of Mycolicibacterium vanbaalenii (strain DSM 7251 / JCM 13017 / BCRC 16820 / KCTC 9966 / NRRL B-24157 / PYR-1) (Mycobacterium vanbaalenii).